Consider the following 431-residue polypeptide: Histidine--tRNA ligase (431 aa).

A disordered region spans residues Met-1–Leu-20.

Belongs to the class-II aminoacyl-tRNA synthetase family. As to quaternary structure, homodimer.

It is found in the cytoplasm. The catalysed reaction is tRNA(His) + L-histidine + ATP = L-histidyl-tRNA(His) + AMP + diphosphate + H(+). This Deinococcus geothermalis (strain DSM 11300 / CIP 105573 / AG-3a) protein is Histidine--tRNA ligase.